Here is a 113-residue protein sequence, read N- to C-terminus: 2Fe-2S ferredoxin (113 aa).

Positions 2–104 (PKVIFLPNED…DLVVEIPKYN (103 aa)) constitute a 2Fe-2S ferredoxin-type domain. [2Fe-2S] cluster is bound by residues cysteine 42, cysteine 48, cysteine 51, and cysteine 87.

It belongs to the adrenodoxin/putidaredoxin family. It depends on [2Fe-2S] cluster as a cofactor.

Functionally, ferredoxin are iron-sulfur proteins that transfer electrons in a wide variety of metabolic reactions. This is 2Fe-2S ferredoxin (fdx) from Haemophilus influenzae (strain ATCC 51907 / DSM 11121 / KW20 / Rd).